Reading from the N-terminus, the 173-residue chain is NADH-ubiquinone oxidoreductase chain 6 (173 aa).

The next 5 membrane-spanning stretches (helical) occupy residues 1–21 (MTYL…AVAS), 27–47 (YGVV…LSLG), 48–68 (VSFV…VVFV), 88–108 (VGYG…GGLI), and 139–159 (YGVG…FVVL).

It belongs to the complex I subunit 6 family.

Its subcellular location is the mitochondrion membrane. It carries out the reaction a ubiquinone + NADH + 5 H(+)(in) = a ubiquinol + NAD(+) + 4 H(+)(out). Functionally, core subunit of the mitochondrial membrane respiratory chain NADH dehydrogenase (Complex I) that is believed to belong to the minimal assembly required for catalysis. Complex I functions in the transfer of electrons from NADH to the respiratory chain. The immediate electron acceptor for the enzyme is believed to be ubiquinone. The polypeptide is NADH-ubiquinone oxidoreductase chain 6 (MT-ND6) (Calidris maritima (Purple sandpiper)).